We begin with the raw amino-acid sequence, 137 residues long: Universal stress protein HP_0031 (137 aa).

This sequence belongs to the universal stress protein A family.

This Helicobacter pylori (strain ATCC 700392 / 26695) (Campylobacter pylori) protein is Universal stress protein HP_0031.